A 346-amino-acid polypeptide reads, in one-letter code: N-acetyl-gamma-glutamyl-phosphate reductase (346 aa).

C149 is an active-site residue.

This sequence belongs to the NAGSA dehydrogenase family. Type 1 subfamily.

It is found in the cytoplasm. The enzyme catalyses N-acetyl-L-glutamate 5-semialdehyde + phosphate + NADP(+) = N-acetyl-L-glutamyl 5-phosphate + NADPH + H(+). It participates in amino-acid biosynthesis; L-arginine biosynthesis; N(2)-acetyl-L-ornithine from L-glutamate: step 3/4. In terms of biological role, catalyzes the NADPH-dependent reduction of N-acetyl-5-glutamyl phosphate to yield N-acetyl-L-glutamate 5-semialdehyde. This Geobacter sulfurreducens (strain ATCC 51573 / DSM 12127 / PCA) protein is N-acetyl-gamma-glutamyl-phosphate reductase.